Reading from the N-terminus, the 448-residue chain is tRNA(Ile)-lysidine synthase (448 aa).

Residue 25–30 (SGGSDS) participates in ATP binding.

It belongs to the tRNA(Ile)-lysidine synthase family.

Its subcellular location is the cytoplasm. It carries out the reaction cytidine(34) in tRNA(Ile2) + L-lysine + ATP = lysidine(34) in tRNA(Ile2) + AMP + diphosphate + H(+). Functionally, ligates lysine onto the cytidine present at position 34 of the AUA codon-specific tRNA(Ile) that contains the anticodon CAU, in an ATP-dependent manner. Cytidine is converted to lysidine, thus changing the amino acid specificity of the tRNA from methionine to isoleucine. In Brucella canis (strain ATCC 23365 / NCTC 10854 / RM-666), this protein is tRNA(Ile)-lysidine synthase.